The sequence spans 740 residues: 1,4-alpha-glucan branching enzyme GlgB (740 aa).

Residue Asp-414 is the Nucleophile of the active site. Glu-467 functions as the Proton donor in the catalytic mechanism.

Belongs to the glycosyl hydrolase 13 family. GlgB subfamily. Monomer.

The enzyme catalyses Transfers a segment of a (1-&gt;4)-alpha-D-glucan chain to a primary hydroxy group in a similar glucan chain.. It functions in the pathway glycan biosynthesis; glycogen biosynthesis. Its function is as follows. Catalyzes the formation of the alpha-1,6-glucosidic linkages in glycogen by scission of a 1,4-alpha-linked oligosaccharide from growing alpha-1,4-glucan chains and the subsequent attachment of the oligosaccharide to the alpha-1,6 position. The chain is 1,4-alpha-glucan branching enzyme GlgB from Rhodospirillum rubrum (strain ATCC 11170 / ATH 1.1.1 / DSM 467 / LMG 4362 / NCIMB 8255 / S1).